The chain runs to 142 residues: Sorting nexin-3 (142 aa).

A PX domain is found at 21-138 (NFLEIEVRNP…ASFIQDPNWD (118 aa)). A 1,2-diacyl-sn-glycero-3-phospho-(1D-myo-inositol-3-phosphate) is bound by residues arginine 64, serine 66, lysine 90, arginine 95, and arginine 104.

The protein belongs to the sorting nexin family.

It localises to the cytoplasm. The protein localises to the golgi apparatus membrane. Its subcellular location is the prevacuolar compartment membrane. In terms of biological role, required for retention of late Golgi membrane proteins. Component of the retrieval machinery that functions by direct interaction with the cytosolic tails of certain TGN membrane proteins during the sorting/budding process at the prevacuolar compartment. Binds phosphatidylinositol 3-phosphate (PtdIns(P3)). This chain is Sorting nexin-3 (snx3), found in Aspergillus fumigatus (strain ATCC MYA-4609 / CBS 101355 / FGSC A1100 / Af293) (Neosartorya fumigata).